The chain runs to 104 residues: uncharacterized protein (104 aa).

This is an uncharacterized protein from Haemophilus influenzae (strain ATCC 51907 / DSM 11121 / KW20 / Rd).